The following is a 447-amino-acid chain: Signal recognition particle protein (447 aa).

GTP contacts are provided by residues 108–115 (GLQGSGKT), 190–194 (DTAGR), and 248–251 (TKLD).

It belongs to the GTP-binding SRP family. SRP54 subfamily. As to quaternary structure, part of the signal recognition particle protein translocation system, which is composed of SRP and FtsY. Interacts with RNA.

The protein localises to the cytoplasm. The catalysed reaction is GTP + H2O = GDP + phosphate + H(+). Its function is as follows. Involved in targeting and insertion of nascent membrane proteins into the cytoplasmic membrane. Binds to the hydrophobic signal sequence of the ribosome-nascent chain (RNC) as it emerges from the ribosomes. The SRP-RNC complex is then targeted to the cytoplasmic membrane where it interacts with the SRP receptor FtsY. The chain is Signal recognition particle protein from Mycoplasma mycoides.